Reading from the N-terminus, the 708-residue chain is Fatty acid oxidation complex subunit alpha (708 aa).

The enoyl-CoA hydratase stretch occupies residues 1–190; sequence MDMEKTFNLT…KMGLVDDAVP (190 aa). Positions 310-708 are 3-hydroxyacyl-CoA dehydrogenase; it reads QKVNKVMVLG…MAEEGTRFFS (399 aa).

In the N-terminal section; belongs to the enoyl-CoA hydratase/isomerase family. The protein in the central section; belongs to the 3-hydroxyacyl-CoA dehydrogenase family. In terms of assembly, heterotetramer of two alpha chains (FadJ) and two beta chains (FadI).

It is found in the cytoplasm. It carries out the reaction a (3S)-3-hydroxyacyl-CoA = a (2E)-enoyl-CoA + H2O. The catalysed reaction is a 4-saturated-(3S)-3-hydroxyacyl-CoA = a (3E)-enoyl-CoA + H2O. It catalyses the reaction a (3S)-3-hydroxyacyl-CoA + NAD(+) = a 3-oxoacyl-CoA + NADH + H(+). The enzyme catalyses (3S)-3-hydroxybutanoyl-CoA = (3R)-3-hydroxybutanoyl-CoA. It functions in the pathway lipid metabolism; fatty acid beta-oxidation. Catalyzes the formation of a hydroxyacyl-CoA by addition of water on enoyl-CoA. Also exhibits 3-hydroxyacyl-CoA epimerase and 3-hydroxyacyl-CoA dehydrogenase activities. The protein is Fatty acid oxidation complex subunit alpha of Shewanella halifaxensis (strain HAW-EB4).